The primary structure comprises 224 residues: Biosynthetic peptidoglycan transglycosylase (224 aa).

Residues 9–29 (VLILVSFVLLIQLWIFCSLAW) form a helical membrane-spanning segment.

It belongs to the glycosyltransferase 51 family.

Its subcellular location is the cell inner membrane. It carries out the reaction [GlcNAc-(1-&gt;4)-Mur2Ac(oyl-L-Ala-gamma-D-Glu-L-Lys-D-Ala-D-Ala)](n)-di-trans,octa-cis-undecaprenyl diphosphate + beta-D-GlcNAc-(1-&gt;4)-Mur2Ac(oyl-L-Ala-gamma-D-Glu-L-Lys-D-Ala-D-Ala)-di-trans,octa-cis-undecaprenyl diphosphate = [GlcNAc-(1-&gt;4)-Mur2Ac(oyl-L-Ala-gamma-D-Glu-L-Lys-D-Ala-D-Ala)](n+1)-di-trans,octa-cis-undecaprenyl diphosphate + di-trans,octa-cis-undecaprenyl diphosphate + H(+). Its pathway is cell wall biogenesis; peptidoglycan biosynthesis. Its function is as follows. Peptidoglycan polymerase that catalyzes glycan chain elongation from lipid-linked precursors. In Acinetobacter baylyi (strain ATCC 33305 / BD413 / ADP1), this protein is Biosynthetic peptidoglycan transglycosylase.